The primary structure comprises 220 residues: Charged multivesicular body protein 4b (220 aa).

Disordered stretches follow at residues 1–22 (MSLF…SPQE) and 180–220 (EIGD…WAAN). Coiled-coil stretches lie at residues 21–88 (QEAI…STIE) and 123–181 (IDKV…LLEI).

It belongs to the SNF7 family. In terms of assembly, probable core component of the endosomal sorting required for transport complex III (ESCRT-III). ESCRT-III components are thought to multimerize to form a flat lattice on the perimeter membrane of the endosome.

The protein localises to the cytoplasm. Its subcellular location is the cytosol. It is found in the late endosome membrane. The protein resides in the midbody. Functionally, probable core component of the endosomal sorting required for transport complex III (ESCRT-III) which is involved in multivesicular bodies (MVBs) formation and sorting of endosomal cargo proteins into MVBs. MVBs contain intraluminal vesicles (ILVs) that are generated by invagination and scission from the limiting membrane of the endosome and mostly are delivered to lysosomes enabling degradation of membrane proteins, such as stimulated growth factor receptors, lysosomal enzymes and lipids. This Danio rerio (Zebrafish) protein is Charged multivesicular body protein 4b (chmp4b).